The primary structure comprises 252 residues: Receptor expression-enhancing protein 2 (252 aa).

Transmembrane regions (helical) follow at residues 1–21 and 35–55; these read MVSW…YPAY and YVKW…ETLT. Ser150 carries the post-translational modification Phosphoserine. The disordered stretch occupies residues 165 to 252; the sequence is LQRPDGRLRP…KKTSGGGDSA (88 aa). Basic and acidic residues predominate over residues 203-217; sequence SRTEASEDDMGDKAP.

This sequence belongs to the DP1 family. In terms of assembly, interacts with odorant receptor proteins. As to expression, detected in brain, heart and skeletal muscle, and at low levels in placenta, kidney and pancreas. Expressed in circumvallate papillae.

The protein localises to the membrane. Its function is as follows. Required for endoplasmic reticulum (ER) network formation, shaping and remodeling. May enhance the cell surface expression of odorant receptors. The polypeptide is Receptor expression-enhancing protein 2 (REEP2) (Homo sapiens (Human)).